A 323-amino-acid polypeptide reads, in one-letter code: Methionyl-tRNA formyltransferase (323 aa).

Residue 115 to 118 (SLLP) coordinates (6S)-5,6,7,8-tetrahydrofolate.

It belongs to the Fmt family.

The catalysed reaction is L-methionyl-tRNA(fMet) + (6R)-10-formyltetrahydrofolate = N-formyl-L-methionyl-tRNA(fMet) + (6S)-5,6,7,8-tetrahydrofolate + H(+). In terms of biological role, attaches a formyl group to the free amino group of methionyl-tRNA(fMet). The formyl group appears to play a dual role in the initiator identity of N-formylmethionyl-tRNA by promoting its recognition by IF2 and preventing the misappropriation of this tRNA by the elongation apparatus. This Lactococcus lactis subsp. cremoris (strain SK11) protein is Methionyl-tRNA formyltransferase.